The sequence spans 314 residues: Malate dehydrogenase (314 aa).

Residues glycine 11–glycine 16 and aspartate 35 each bind NAD(+). Substrate contacts are provided by arginine 84 and arginine 90. NAD(+)-binding positions include asparagine 97 and isoleucine 120–asparagine 122. Substrate-binding residues include asparagine 122 and arginine 153. Residue histidine 177 is the Proton acceptor of the active site.

It belongs to the LDH/MDH superfamily. MDH type 3 family.

It carries out the reaction (S)-malate + NAD(+) = oxaloacetate + NADH + H(+). Its function is as follows. Catalyzes the reversible oxidation of malate to oxaloacetate. This chain is Malate dehydrogenase, found in Rickettsia canadensis (strain McKiel).